A 1189-amino-acid chain; its full sequence is Disabled homolog 2-interacting protein (1189 aa).

The tract at residues 1 to 75 (MSAGGSARKS…EPSAATPFRV (75 aa)) is disordered. Residues 20 to 38 (LLRRPRLQRQRSRSRSRTR) show a composition bias toward basic residues. Residues 39 to 49 (PARESPQERPG) are compositionally biased toward basic and acidic residues. Positions 101 to 202 (SFRHILPGFR…WMENLRRAVH (102 aa)) constitute a PH domain. Positions 193–311 (WMENLRRAVH…AGRQFVEKWY (119 aa)) constitute a C2 domain. The Ras-GAP domain maps to 387 to 595 (GKVKDFLTDL…TNMQRFLLEI (209 aa)). Positions 646–943 (LRDVHTALST…RTPPNLLSTL (298 aa)) are necessary for interaction with AKT1. Residues 653–668 (LSTPGSGQLPGTNDLA) are compositionally biased toward polar residues. Disordered regions lie at residues 653–678 (LSTP…SSSI) and 715–742 (RSSG…MANG). A compositionally biased stretch (low complexity) spans 669–678 (STPGSGSSSI). Residues 715-731 (RSSGVQPSPARSSSYSE) are compositionally biased toward polar residues. Position 728 is a phosphoserine; by MAP3K5 and RIPK1 (serine 728). Serine 747 is subject to Phosphoserine. Disordered stretches follow at residues 803–823 (AGQT…PQLL), 843–865 (PRGL…NSEE), 895–998 (SLTE…SPNA), 1015–1035 (EDEG…KDEL), and 1164–1189 (RNGI…SSNC). The segment covering 852–865 (EGHSSLSSHSNSEE) has biased composition (low complexity). Residues 919-931 (QPPPPPPPPPPAP) show a composition bias toward pro residues. Polar residues-rich tracts occupy residues 938–955 (NLLS…TLAS) and 966–976 (RLRQQSSSSKG). A phosphoserine mark is found at serine 978 and serine 995. The segment covering 1023–1035 (PPHRDRLRSKDEL) has biased composition (basic and acidic residues). Positions 1026-1159 (RDRLRSKDEL…SALTQLKERY (134 aa)) form a coiled coil.

In terms of assembly, on plasma membrane, exists in an inactive form complexed with TNFR1; in response to TNF-alpha, dissociates from TNFR1 complex, translocates to cytoplasm and forms part of an intracellular signaling complex comprising TRADD, RIPK1, TRAF2 and MAP3K5. Interacts with DAB1. Interacts (via NPXY motif) with DAB2 (via PID domain). Interacts (via PH domain) with ERN1. Part of a cytoplasmic complex made of HIPK1, DAB2IP and MAP3K5 in response to TNF-alpha; this complex formation promotes MAP3K5-JNK activation and subsequent apoptosis. Interacts (via N-terminal domain) with JAK2; the interaction occurs in a IFNG/IFN-gamma-dependent manner and inhibits JAK2 autophosphorylation activity. Interacts (via C2 domain) with GSK3B; the interaction stimulates GSK3B kinase activation. Interacts (via C2 domain) with PPP2CA. Interacts (via proline-rich motif) with a regulatory p85 subunit (via SH3 domain) of the PI3K complex; the interaction inhibits the PI3K-AKT complex activity in a TNF-alpha-dependent manner in prostate cancer (PCa) cells. Interacts with AKT1; the interaction is increased in a TNF-alpha-induced manner. Interacts (via C2 domain and active form preferentially) with KDR/VEGFR2 (tyrosine-phosphorylated active form preferentially); the interaction occurs at the late phase of VEGFA response and inhibits KDR/VEGFR2 activity. Interacts (via N-terminus C2 domain) with MAP3K5 ('Ser-966' dephosphorylated form preferentially); the interaction occurs in a TNF-alpha-induced manner. Interacts (via Ras-GAP domain) with the catalytic subunit of protein phosphatase PP2A; the interaction occurs in resting endothelial cells, is further enhanced by TNF-alpha stimulation and is required to bridge PP2A to MAP3K5. Interacts (via C-terminus PER domain) with TRAF2 (via zinc fingers); the interaction occurs in a TNF-alpha-dependent manner. Interacts with 14-3-3 proteins; the interaction occurs in a TNF-alpha-dependent manner. Interacts (via Ras-GAP domain) with RIPK1 (via kinase domain); the interaction occurs in a TNF-alpha-dependent manner. Interacts with RAB40C; acts as a GAP for RAB40C. In response to TNF-alpha-induction, phosphorylated at Ser-728; phosphorylation leads to a conformational change, and thus, increases its association with 14-3-3 proteins, MAP3K5, RIPK1 and TRAF2 in endothelial cells; also stimulates regulatory p85 subunit sequestring and PI3K-p85 complex activity inhibition. As to expression, expressed in endothelial and vascular smooth muscle cells (VSMCs). Expressed in prostate epithelial but poorly in prostate cancer cells. Poorly expressed in medulloblastoma cells compared to cerebellar precursor proliferating progenitor cells (at protein level). Low expression in prostate. Down-regulated in prostate cancer.

The protein resides in the cytoplasm. It localises to the cell membrane. The protein localises to the membrane. Its subcellular location is the cell projection. It is found in the dendrite. Functions as a scaffold protein implicated in the regulation of a large spectrum of both general and specialized signaling pathways. Involved in several processes such as innate immune response, inflammation and cell growth inhibition, apoptosis, cell survival, angiogenesis, cell migration and maturation. Also plays a role in cell cycle checkpoint control; reduces G1 phase cyclin levels resulting in G0/G1 cell cycle arrest. Mediates signal transduction by receptor-mediated inflammatory signals, such as the tumor necrosis factor (TNF), interferon (IFN) or lipopolysaccharide (LPS). Modulates the balance between phosphatidylinositol 3-kinase (PI3K)-AKT-mediated cell survival and apoptosis stimulated kinase (MAP3K5)-JNK signaling pathways; sequesters both AKT1 and MAP3K5 and counterbalances the activity of each kinase by modulating their phosphorylation status in response to pro-inflammatory stimuli. Acts as a regulator of the endoplasmic reticulum (ER) unfolded protein response (UPR) pathway; specifically involved in transduction of the ER stress-response to the JNK cascade through ERN1. Mediates TNF-alpha-induced apoptosis activation by facilitating dissociation of inhibitor 14-3-3 from MAP3K5; recruits the PP2A phosphatase complex which dephosphorylates MAP3K5 on 'Ser-966', leading to the dissociation of 13-3-3 proteins and activation of the MAP3K5-JNK signaling pathway in endothelial cells. Also mediates TNF/TRAF2-induced MAP3K5-JNK activation, while it inhibits CHUK-NF-kappa-B signaling. Acts a negative regulator in the IFN-gamma-mediated JAK-STAT signaling cascade by inhibiting smooth muscle cell (VSMCs) proliferation and intimal expansion, and thus, prevents graft arteriosclerosis (GA). Acts as a GTPase-activating protein (GAP) for the ADP ribosylation factor 6 (ARF6), Ras and RAB40C. Promotes hydrolysis of the ARF6-bound GTP and thus, negatively regulates phosphatidylinositol 4,5-bisphosphate (PIP2)-dependent TLR4-TIRAP-MyD88 and NF-kappa-B signaling pathways in endothelial cells in response to lipopolysaccharides (LPS). Binds specifically to phosphatidylinositol 4-phosphate (PtdIns4P) and phosphatidylinositol 3-phosphate (PtdIns3P). In response to vascular endothelial growth factor (VEGFA), acts as a negative regulator of the VEGFR2-PI3K-mediated angiogenic signaling pathway by inhibiting endothelial cell migration and tube formation. In the developing brain, promotes both the transition from the multipolar to the bipolar stage and the radial migration of cortical neurons from the ventricular zone toward the superficial layer of the neocortex in a glial-dependent locomotion process. Probable downstream effector of the Reelin signaling pathway; promotes Purkinje cell (PC) dendrites development and formation of cerebellar synapses. Also functions as a tumor suppressor protein in prostate cancer progression; prevents cell proliferation and epithelial-to-mesenchymal transition (EMT) through activation of the glycogen synthase kinase-3 beta (GSK3B)-induced beta-catenin and inhibition of PI3K-AKT and Ras-MAPK survival downstream signaling cascades, respectively. The chain is Disabled homolog 2-interacting protein from Homo sapiens (Human).